The sequence spans 194 residues: uncharacterized protein (194 aa).

The region spanning 6–66 (EFDTALVLHR…SAVKSYLEGK (61 aa)) is the HTH tetR-type domain. Positions 29–48 (SLQDLLSHLGIARQSLYDTY) form a DNA-binding region, H-T-H motif.

This is an uncharacterized protein from Bacillus subtilis (strain 168).